Here is a 210-residue protein sequence, read N- to C-terminus: Chorismate pyruvate-lyase (210 aa).

This sequence belongs to the chorismate pyruvate-lyase type 2 family.

It carries out the reaction chorismate = 4-hydroxybenzoate + pyruvate. Functionally, removes the pyruvyl group from chorismate to provide 4-hydroxybenzoate (4HB). Involved in the synthesis of glycosylated p-hydroxybenzoic acid methyl esters (p-HBADs) and phenolic glycolipids (PGL) that play important roles in the pathogenesis of mycobacterial infections. In Mycobacterium leprae (strain TN), this protein is Chorismate pyruvate-lyase.